The primary structure comprises 503 residues: MTIYNINLGIGWASSGVEYAQAYRAGVFRKLNLSSKFIFTDMILADNIQHLTANIGFDDNQVIWLYNHFTDIKIAPTSVTVDDVLAYFGGEESHREKNGKVLRVFFFDQDKFVTCYLVDENKDLVQHAEYVFKGNLIRKDYFSYTRYCSEYFAPKDNVAVLYQRTFYNEDGTPVYDILMNQGKEEVYHFKDKIFYGKQAFVRAFMKSLNLNKSDLVILDRETGIGQVVFEEAQTAHLAVVVHAEHYSENATNEDYILWNNYYDYQFTNADKVDFFIVSTDRQNEVLQEQFAKYTQHQPKIVTIPVGSIDSLTDSSQGRKPFSLITASRLAKEKHIDWLVKAVIEAHKELPELTFDIYGSGGEDSLLREIIANHQAEDYIQLKGHAELSQIYSQYEVYLTASTSEGFGLTLMEAIGSGLPLIGFDVPYGNQTFIEDGQNGYLIPSSSDHVEDQIKQAYAAKICQLYQENRLEAMRAYSYQIAEGFLTKEILEKWKKTVEEVLHD.

Residues 1-78 (MTIYNINLGI…FTDIKIAPTS (78 aa)) are N-terminus R-fold-1. 16–19 (GVEY) lines the UDP pocket. Positions 79–195 (VTVDDVLAYF…VYHFKDKIFY (117 aa)) are extended beta-sheet domain. The segment at 196-306 (GKQAFVRAFM…QPKIVTIPVG (111 aa)) is C-terminus R-fold-1. An N-acetyl-D-glucosamine-binding site is contributed by H242. Residues 307 to 503 (SIDSLTDSSQ…KKTVEEVLHD (197 aa)) form an R-fold-2 region. Position 328 (R328) interacts with UDP. E332 serves as a coordination point for N-acetyl-D-glucosamine. UDP contacts are provided by residues K333, G358, and 384–385 (HA). 404 to 407 (EGFG) lines the N-acetyl-D-glucosamine pocket. Position 408–412 (408–412 (LTLME)) interacts with UDP.

Belongs to the glycosyltransferase group 1 family. Glycosyltransferase 4 subfamily. In terms of assembly, monomer. Interacts with stabilizing protein GtfB, probably as a heterotetramer with 2 subunits each of GtfA and GtfB, part of the accessory SecA2/SecY2 protein translocation apparatus.

The protein localises to the cytoplasm. It localises to the cell membrane. It catalyses the reaction L-seryl-[protein] + UDP-N-acetyl-alpha-D-glucosamine = 3-O-[N-acetyl-alpha-D-glucosaminyl]-L-seryl-[protein] + UDP + H(+). It participates in protein modification; protein glycosylation. In terms of biological role, required for the polymorphic O-glycosylation of serine-rich repeat protein PsrP. Catalyzes the first step in glycosylation by transferring N-acetylglucosamine from UDP-GlcNAc to serine residues in PsrP. Part of the accessory SecA2/SecY2 system specifically required to export serine-rich repeat cell wall proteins encoded upstream in the same operon. The GtfA-GtfB complex adds GlcNAc from UDP-GlcNAc to PsrP (experimentally characterized with truncated PsrP-SSR1 constructs); this subunit alone has weak N-acetylglucosaminyl transferase activity that is 10-fold stimulated by GtfB. The complex requires at least a 25 residue-long peptide for activity; the in vitro assay has only been seen to glycosylate Ser residues. The alpha linkage was shown in L.reuteri. The protein is UDP-N-acetylglucosamine--peptide N-acetylglucosaminyltransferase GtfA subunit of Streptococcus pneumoniae serotype 4 (strain ATCC BAA-334 / TIGR4).